Consider the following 245-residue polypeptide: Ribonuclease PH (245 aa).

Residues R86 and 124 to 126 (GTR) each bind phosphate.

The protein belongs to the RNase PH family. As to quaternary structure, homohexameric ring arranged as a trimer of dimers.

It catalyses the reaction tRNA(n+1) + phosphate = tRNA(n) + a ribonucleoside 5'-diphosphate. Its function is as follows. Phosphorolytic 3'-5' exoribonuclease that plays an important role in tRNA 3'-end maturation. Removes nucleotide residues following the 3'-CCA terminus of tRNAs; can also add nucleotides to the ends of RNA molecules by using nucleoside diphosphates as substrates, but this may not be physiologically important. Probably plays a role in initiation of 16S rRNA degradation (leading to ribosome degradation) during starvation. The sequence is that of Ribonuclease PH from Bacillus cereus (strain ATCC 10987 / NRS 248).